A 223-amino-acid chain; its full sequence is Putative C-type lectin protein 51 (223 aa).

A signal peptide spans 1–31 (MAKRINFTSCLIFTSCFTAFIVSLCLLVSSC). The C-type lectin domain maps to 111 to 218 (QEGRCYHYSR…CDTPRRCLCG (108 aa)). A disulfide bridge links Cys-193 with Cys-209.

The protein is Putative C-type lectin protein 51 (51) of Equine herpesvirus 2 (strain 86/87) (EHV-2).